The chain runs to 427 residues: Peptidase B (427 aa).

Mn(2+) is bound by residues lysine 195 and aspartate 200. The active site involves lysine 207. The Mn(2+) site is built by aspartate 218, aspartate 277, and glutamate 279. Arginine 281 is an active-site residue.

This sequence belongs to the peptidase M17 family. Homohexamer. Mn(2+) is required as a cofactor.

It is found in the cytoplasm. It catalyses the reaction Release of an N-terminal amino acid, Xaa, from a peptide or arylamide. Xaa is preferably Glu or Asp but may be other amino acids, including Leu, Met, His, Cys and Gln.. Its function is as follows. Probably plays an important role in intracellular peptide degradation. This is Peptidase B from Escherichia coli (strain UTI89 / UPEC).